Reading from the N-terminus, the 103-residue chain is N(4)-acetylcytidine amidohydrolase (103 aa).

The ASCH domain occupies 6 to 101; it reads ITFFQRFQDD…QIQFYVIEFK (96 aa). Lys-21 functions as the Proton acceptor in the catalytic mechanism. Residue Thr-24 is the Nucleophile of the active site. Glu-74 serves as the catalytic Proton donor.

It belongs to the N(4)-acetylcytidine amidohydrolase family.

The catalysed reaction is N(4)-acetylcytidine + H2O = cytidine + acetate + H(+). It carries out the reaction N(4)-acetyl-2'-deoxycytidine + H2O = 2'-deoxycytidine + acetate + H(+). It catalyses the reaction N(4)-acetylcytosine + H2O = cytosine + acetate + H(+). Its function is as follows. Catalyzes the hydrolysis of N(4)-acetylcytidine (ac4C). The sequence is that of N(4)-acetylcytidine amidohydrolase (yqfB) from Escherichia coli (strain SMS-3-5 / SECEC).